Here is an 80-residue protein sequence, read N- to C-terminus: Acyl carrier protein (80 aa).

A Carrier domain is found at 4–79 (EEILQKVCSI…DAVKFIEEKK (76 aa)). An O-(pantetheine 4'-phosphoryl)serine modification is found at Ser-39.

Belongs to the acyl carrier protein (ACP) family. Post-translationally, 4'-phosphopantetheine is transferred from CoA to a specific serine of apo-ACP by AcpS. This modification is essential for activity because fatty acids are bound in thioester linkage to the sulfhydryl of the prosthetic group.

It localises to the cytoplasm. It participates in lipid metabolism; fatty acid biosynthesis. Its function is as follows. Carrier of the growing fatty acid chain in fatty acid biosynthesis. The chain is Acyl carrier protein from Prochlorococcus marinus subsp. pastoris (strain CCMP1986 / NIES-2087 / MED4).